The sequence spans 491 residues: Glutamyl-tRNA(Gln) amidotransferase subunit A (491 aa).

Residues Lys-76 and Ser-154 each act as charge relay system in the active site. The Acyl-ester intermediate role is filled by Ser-178.

The protein belongs to the amidase family. GatA subfamily. As to quaternary structure, heterotrimer of A, B and C subunits.

The catalysed reaction is L-glutamyl-tRNA(Gln) + L-glutamine + ATP + H2O = L-glutaminyl-tRNA(Gln) + L-glutamate + ADP + phosphate + H(+). Its function is as follows. Allows the formation of correctly charged Gln-tRNA(Gln) through the transamidation of misacylated Glu-tRNA(Gln) in organisms which lack glutaminyl-tRNA synthetase. The reaction takes place in the presence of glutamine and ATP through an activated gamma-phospho-Glu-tRNA(Gln). In Cereibacter sphaeroides (strain ATCC 17023 / DSM 158 / JCM 6121 / CCUG 31486 / LMG 2827 / NBRC 12203 / NCIMB 8253 / ATH 2.4.1.) (Rhodobacter sphaeroides), this protein is Glutamyl-tRNA(Gln) amidotransferase subunit A.